We begin with the raw amino-acid sequence, 468 residues long: Squamosa promoter-binding-like protein 5 (468 aa).

The SBP-type zinc-finger motif lies at 204–281 (PPRCQAEGCK…TEHNRRRRKP (78 aa)). Zn(2+) is bound by residues Cys-207, Cys-212, Cys-229, His-232, Cys-248, Cys-251, His-255, and Cys-267. Positions 264–280 (KRSCRKRLTEHNRRRRK) match the Bipartite nuclear localization signal motif. 3 disordered regions span residues 270–305 (RLTE…DASI), 354–374 (TLSL…DGGL), and 405–458 (HHHL…SNNN). A compositionally biased stretch (acidic residues) spans 363–372 (QEEDDEDEDG). Residues 438–458 (NNNNILSCSSASDQQNSSNNN) show a composition bias toward low complexity.

As to expression, ubiquitous.

Its subcellular location is the nucleus. In terms of biological role, trans-acting factor that binds specifically to the consensus nucleotide sequence 5'-TNCGTACAA-3'. In Oryza sativa subsp. japonica (Rice), this protein is Squamosa promoter-binding-like protein 5 (SPL5).